The primary structure comprises 305 residues: Oxygen-dependent coproporphyrinogen-III oxidase (305 aa).

S98 is a binding site for substrate. Positions 102 and 112 each coordinate a divalent metal cation. H112 acts as the Proton donor in catalysis. 114–116 (NVR) is a binding site for substrate. The a divalent metal cation site is built by H151 and H181. An important for dimerization region spans residues 246–281 (YVEFNLVYDRGTLFGLQSGGRTESILMSMPPLARWE). Substrate is bound at residue 264 to 266 (GGR).

It belongs to the aerobic coproporphyrinogen-III oxidase family. As to quaternary structure, homodimer. The cofactor is a divalent metal cation.

The protein localises to the cytoplasm. It catalyses the reaction coproporphyrinogen III + O2 + 2 H(+) = protoporphyrinogen IX + 2 CO2 + 2 H2O. It participates in porphyrin-containing compound metabolism; protoporphyrin-IX biosynthesis; protoporphyrinogen-IX from coproporphyrinogen-III (O2 route): step 1/1. Its function is as follows. Involved in the heme biosynthesis. Catalyzes the aerobic oxidative decarboxylation of propionate groups of rings A and B of coproporphyrinogen-III to yield the vinyl groups in protoporphyrinogen-IX. In Vibrio vulnificus (strain CMCP6), this protein is Oxygen-dependent coproporphyrinogen-III oxidase.